We begin with the raw amino-acid sequence, 205 residues long: N-(5'-phosphoribosyl)anthranilate isomerase (205 aa).

Belongs to the TrpF family.

The catalysed reaction is N-(5-phospho-beta-D-ribosyl)anthranilate = 1-(2-carboxyphenylamino)-1-deoxy-D-ribulose 5-phosphate. The protein operates within amino-acid biosynthesis; L-tryptophan biosynthesis; L-tryptophan from chorismate: step 3/5. The chain is N-(5'-phosphoribosyl)anthranilate isomerase from Acidiphilium cryptum (strain JF-5).